Here is a 182-residue protein sequence, read N- to C-terminus: Peptidoglycan-recognition protein SB2 (182 aa).

The first 17 residues, 1–17 (MKLQLALVLCGLTLALG), serve as a signal peptide directing secretion. Residues 40-165 (PVRLIIIHHT…CQTKATACPG (126 aa)) form the N-acetylmuramoyl-L-alanine amidase domain. His47 is a binding site for Zn(2+). Residues Cys54 and Cys60 are joined by a disulfide bond. Asn149 carries N-linked (GlcNAc...) asparagine glycosylation. Zn(2+) is bound by residues His155 and Cys163.

It belongs to the N-acetylmuramoyl-L-alanine amidase 2 family. Requires Zn(2+) as cofactor.

It localises to the secreted. The catalysed reaction is Hydrolyzes the link between N-acetylmuramoyl residues and L-amino acid residues in certain cell-wall glycopeptides.. N-acetylmuramyl-L-alanine amidase involved in innate immunity by degrading bacterial peptidoglycans (PGN). Probably plays a scavenger role by digesting biologically active PGN into biologically inactive fragments. Has no direct bacteriolytic activity. The polypeptide is Peptidoglycan-recognition protein SB2 (PGRP-SB2) (Drosophila simulans (Fruit fly)).